We begin with the raw amino-acid sequence, 409 residues long: Ribose-phosphate pyrophosphokinase 1 (409 aa).

Mg(2+) contacts are provided by aspartate 128, histidine 130, and aspartate 143. Position 199 is a phosphoserine (serine 199).

It belongs to the ribose-phosphate pyrophosphokinase family.

The protein resides in the cytoplasm. It carries out the reaction D-ribose 5-phosphate + ATP = 5-phospho-alpha-D-ribose 1-diphosphate + AMP + H(+). Its pathway is metabolic intermediate biosynthesis; 5-phospho-alpha-D-ribose 1-diphosphate biosynthesis; 5-phospho-alpha-D-ribose 1-diphosphate from D-ribose 5-phosphate (route I): step 1/1. 5-phosphoribose 1-diphosphate synthase involved in nucleotide, histidine, and tryptophan biosynthesis. Active in heteromultimeric complexes with other 5-phosphoribose 1-diphosphate synthases. This chain is Ribose-phosphate pyrophosphokinase 1, found in Schizosaccharomyces pombe (strain 972 / ATCC 24843) (Fission yeast).